The sequence spans 247 residues: Type III pantothenate kinase (247 aa).

Ala7–His14 serves as a coordination point for ATP. Substrate-binding positions include Tyr91 and Gly95–Arg98. The active-site Proton acceptor is the Asp97. Asp117 serves as a coordination point for K(+). Thr120 is an ATP binding site.

The protein belongs to the type III pantothenate kinase family. Homodimer. NH4(+) is required as a cofactor. Requires K(+) as cofactor.

It localises to the cytoplasm. It catalyses the reaction (R)-pantothenate + ATP = (R)-4'-phosphopantothenate + ADP + H(+). It participates in cofactor biosynthesis; coenzyme A biosynthesis; CoA from (R)-pantothenate: step 1/5. Catalyzes the phosphorylation of pantothenate (Pan), the first step in CoA biosynthesis. In Synechococcus sp. (strain ATCC 27144 / PCC 6301 / SAUG 1402/1) (Anacystis nidulans), this protein is Type III pantothenate kinase.